The primary structure comprises 158 residues: NAD(P)H-quinone oxidoreductase subunit N (158 aa).

This sequence belongs to the complex I NdhN subunit family. NDH-1 can be composed of about 15 different subunits; different subcomplexes with different compositions have been identified which probably have different functions.

The protein localises to the cellular thylakoid membrane. It catalyses the reaction a plastoquinone + NADH + (n+1) H(+)(in) = a plastoquinol + NAD(+) + n H(+)(out). It carries out the reaction a plastoquinone + NADPH + (n+1) H(+)(in) = a plastoquinol + NADP(+) + n H(+)(out). Its function is as follows. NDH-1 shuttles electrons from an unknown electron donor, via FMN and iron-sulfur (Fe-S) centers, to quinones in the respiratory and/or the photosynthetic chain. The immediate electron acceptor for the enzyme in this species is believed to be plastoquinone. Couples the redox reaction to proton translocation, and thus conserves the redox energy in a proton gradient. Cyanobacterial NDH-1 also plays a role in inorganic carbon-concentration. This chain is NAD(P)H-quinone oxidoreductase subunit N, found in Prochlorococcus marinus (strain MIT 9215).